The chain runs to 526 residues: NAD(P)H-quinone oxidoreductase chain 4 (526 aa).

The next 13 helical transmembrane spans lie at 5 to 25 (FPWL…VPLI), 32 to 52 (WYSF…FFTS), 87 to 107 (LILL…PVTL), 111 to 131 (MFHF…AVQD), 133 to 153 (VLFF…LAIW), 165 to 185 (FILY…AMYF), 211 to 231 (FLGL…HTWL), 239 to 259 (TAPV…YALI), 273 to 293 (FAPL…LTSF), 302 to 320 (IAYS…VGSL), 331 to 351 (QMIS…ATYD), 371 to 393 (IFAM…GFVA), and 414 to 434 (LVVL…LSML).

Belongs to the complex I subunit 4 family.

It localises to the cell inner membrane. It carries out the reaction a plastoquinone + NADH + (n+1) H(+)(in) = a plastoquinol + NAD(+) + n H(+)(out). The catalysed reaction is a plastoquinone + NADPH + (n+1) H(+)(in) = a plastoquinol + NADP(+) + n H(+)(out). Functionally, NDH-1 shuttles electrons from NAD(P)H, via FMN and iron-sulfur (Fe-S) centers, to quinones in the respiratory chain. The immediate electron acceptor for the enzyme in this species is believed to be plastoquinone. Couples the redox reaction to proton translocation (for every two electrons transferred, four hydrogen ions are translocated across the cytoplasmic membrane), and thus conserves the redox energy in a proton gradient. This is NAD(P)H-quinone oxidoreductase chain 4 from Gloeobacter violaceus (strain ATCC 29082 / PCC 7421).